The chain runs to 44 residues: F420-non-reducing hydrogenase vhu subunit U (44 aa).

The Ni(2+) site is built by Sec-20 and Cys-23. Position 20 (Sec-20) is a non-standard amino acid, selenocysteine. A propeptide spans 27 to 44 (MIVEDAEGNVVFEIVNDE) (removed in mature form).

It belongs to the [NiFe]/[NiFeSe] hydrogenase large subunit family. As to quaternary structure, the F420-non-reducing hydrogenase vhu is composed of four subunits; VhuA, VhuD, VhuG and VhuU. Requires Ni(2+) as cofactor.

The protein is F420-non-reducing hydrogenase vhu subunit U (vhuU) of Methanococcus voltae.